The sequence spans 216 residues: MNPATQLADGIATLGLSITESNQARLLQYLALIQKWNRVHNLTAVREPEAMLALHVLDSLAVLPHIGGSRIADVGSGAGLPGIPVALARPEWRVVLVESNHKKAAFLQQARIELGLENVEVIGERMEGVRSNAGFNTVISRAFSDLADFVKLAGHLCARGEEQGTDCGRLVAMKGVYPHEELAQLPETFIVDNILSLTIPGLRAKRHLVVLKRAGQ.

G75, L80, and R141 together coordinate S-adenosyl-L-methionine.

This sequence belongs to the methyltransferase superfamily. RNA methyltransferase RsmG family.

The protein localises to the cytoplasm. The catalysed reaction is guanosine(527) in 16S rRNA + S-adenosyl-L-methionine = N(7)-methylguanosine(527) in 16S rRNA + S-adenosyl-L-homocysteine. In terms of biological role, specifically methylates the N7 position of guanine in position 527 of 16S rRNA. The polypeptide is Ribosomal RNA small subunit methyltransferase G (Nitrosospira multiformis (strain ATCC 25196 / NCIMB 11849 / C 71)).